Here is a 369-residue protein sequence, read N- to C-terminus: Peptide chain release factor 2 (369 aa).

Residue glutamine 251 is modified to N5-methylglutamine.

The protein belongs to the prokaryotic/mitochondrial release factor family. Methylated by PrmC. Methylation increases the termination efficiency of RF2.

It is found in the cytoplasm. In terms of biological role, peptide chain release factor 2 directs the termination of translation in response to the peptide chain termination codons UGA and UAA. This Chlamydia trachomatis serovar A (strain ATCC VR-571B / DSM 19440 / HAR-13) protein is Peptide chain release factor 2.